The sequence spans 224 residues: 7-cyano-7-deazaguanine synthase (224 aa).

12 to 22 is a binding site for ATP; the sequence is LSGGLDSSTVT. Positions 193, 201, 204, and 207 each coordinate Zn(2+).

This sequence belongs to the QueC family. Requires Zn(2+) as cofactor.

The catalysed reaction is 7-carboxy-7-deazaguanine + NH4(+) + ATP = 7-cyano-7-deazaguanine + ADP + phosphate + H2O + H(+). It functions in the pathway purine metabolism; 7-cyano-7-deazaguanine biosynthesis. Its function is as follows. Catalyzes the ATP-dependent conversion of 7-carboxy-7-deazaguanine (CDG) to 7-cyano-7-deazaguanine (preQ(0)). This Prochlorococcus marinus subsp. pastoris (strain CCMP1986 / NIES-2087 / MED4) protein is 7-cyano-7-deazaguanine synthase.